The primary structure comprises 268 residues: Tryptophan synthase alpha chain (268 aa).

Active-site proton acceptor residues include E49 and D60.

The protein belongs to the TrpA family. As to quaternary structure, tetramer of two alpha and two beta chains.

The catalysed reaction is (1S,2R)-1-C-(indol-3-yl)glycerol 3-phosphate + L-serine = D-glyceraldehyde 3-phosphate + L-tryptophan + H2O. The protein operates within amino-acid biosynthesis; L-tryptophan biosynthesis; L-tryptophan from chorismate: step 5/5. The alpha subunit is responsible for the aldol cleavage of indoleglycerol phosphate to indole and glyceraldehyde 3-phosphate. This Xylella fastidiosa (strain M23) protein is Tryptophan synthase alpha chain.